The sequence spans 274 residues: Dermonecrotic toxin SdSicTox-betaIIB1biii (274 aa).

Residue H5 is part of the active site. 2 residues coordinate Mg(2+): E25 and D27. H41 acts as the Nucleophile in catalysis. Cystine bridges form between C45/C51 and C47/C190. D85 provides a ligand contact to Mg(2+).

The protein belongs to the arthropod phospholipase D family. Class II subfamily. The cofactor is Mg(2+). As to expression, expressed by the venom gland.

It localises to the secreted. The enzyme catalyses an N-(acyl)-sphingosylphosphocholine = an N-(acyl)-sphingosyl-1,3-cyclic phosphate + choline. It catalyses the reaction an N-(acyl)-sphingosylphosphoethanolamine = an N-(acyl)-sphingosyl-1,3-cyclic phosphate + ethanolamine. The catalysed reaction is a 1-acyl-sn-glycero-3-phosphocholine = a 1-acyl-sn-glycero-2,3-cyclic phosphate + choline. It carries out the reaction a 1-acyl-sn-glycero-3-phosphoethanolamine = a 1-acyl-sn-glycero-2,3-cyclic phosphate + ethanolamine. Dermonecrotic toxins cleave the phosphodiester linkage between the phosphate and headgroup of certain phospholipids (sphingolipid and lysolipid substrates), forming an alcohol (often choline) and a cyclic phosphate. This toxin acts on sphingomyelin (SM). It may also act on ceramide phosphoethanolamine (CPE), lysophosphatidylcholine (LPC) and lysophosphatidylethanolamine (LPE), but not on lysophosphatidylserine (LPS), and lysophosphatidylglycerol (LPG). It acts by transphosphatidylation, releasing exclusively cyclic phosphate products as second products. Induces dermonecrosis, hemolysis, increased vascular permeability, edema, inflammatory response, and platelet aggregation. The protein is Dermonecrotic toxin SdSicTox-betaIIB1biii of Sicarius cf. damarensis (strain GJB-2008) (Six-eyed sand spider).